Reading from the N-terminus, the 20-residue chain is Hemocyanin subunit II (20 aa).

The interval 1-20 is disordered; sequence DVVASSTAHKQQDINHLLDK. The segment covering 10–20 has biased composition (basic and acidic residues); it reads KQQDINHLLDK.

The protein belongs to the tyrosinase family. Hemocyanin subfamily. Composed of 3 major subunits (IB, II and III) and 1 minor subunit (IA) which form homohexamers and heterohexamers. May also form larger structures. Hemolymph.

It localises to the secreted. Its subcellular location is the extracellular space. Hemocyanins are copper-containing oxygen carriers occurring freely dissolved in the hemolymph of many mollusks and arthropods. The polypeptide is Hemocyanin subunit II (Panulirus japonicus (Japanese spiny lobster)).